A 190-amino-acid polypeptide reads, in one-letter code: dCTP deaminase (190 aa).

Lysine 113–arginine 118 provides a ligand contact to dCTP. Glutamate 139 acts as the Proton donor/acceptor in catalysis. Glutamine 158, tyrosine 172, lysine 181, and glutamine 182 together coordinate dCTP.

Belongs to the dCTP deaminase family. Homotrimer.

It carries out the reaction dCTP + H2O + H(+) = dUTP + NH4(+). It participates in pyrimidine metabolism; dUMP biosynthesis; dUMP from dCTP (dUTP route): step 1/2. In terms of biological role, catalyzes the deamination of dCTP to dUTP. This is dCTP deaminase from Chlamydia trachomatis serovar A (strain ATCC VR-571B / DSM 19440 / HAR-13).